The chain runs to 366 residues: S-adenosylmethionine:tRNA ribosyltransferase-isomerase (366 aa).

The protein belongs to the QueA family. Monomer.

It is found in the cytoplasm. It catalyses the reaction 7-aminomethyl-7-carbaguanosine(34) in tRNA + S-adenosyl-L-methionine = epoxyqueuosine(34) in tRNA + adenine + L-methionine + 2 H(+). The protein operates within tRNA modification; tRNA-queuosine biosynthesis. Transfers and isomerizes the ribose moiety from AdoMet to the 7-aminomethyl group of 7-deazaguanine (preQ1-tRNA) to give epoxyqueuosine (oQ-tRNA). This chain is S-adenosylmethionine:tRNA ribosyltransferase-isomerase, found in Bradyrhizobium diazoefficiens (strain JCM 10833 / BCRC 13528 / IAM 13628 / NBRC 14792 / USDA 110).